The following is a 435-amino-acid chain: Zinc finger CCCH domain-containing protein 17 (435 aa).

Disordered regions lie at residues Met-1–Ser-30 and Thr-58–His-107. Residues Ser-28–Leu-54 form a C3H1-type 1 zinc finger. Residues Ser-77 to Gly-103 show a composition bias toward gly residues. The segment at Lys-108–Ser-135 adopts a C3H1-type 2 zinc-finger fold. WD repeat units lie at residues Gly-148–Asn-189, Gly-191–Leu-225, Gly-227–Glu-264, Gly-271–Thr-308, Asp-311–Val-348, Glu-355–Arg-395, and Phe-397–Lys-435.

The sequence is that of Zinc finger CCCH domain-containing protein 17 from Oryza sativa subsp. japonica (Rice).